Reading from the N-terminus, the 356-residue chain is Holliday junction branch migration complex subunit RuvB (356 aa).

Positions L13 to Y197 are large ATPase domain (RuvB-L). Residues L36, R37, G78, K81, T82, T83, E144–Y146, R187, Y197, and R234 each bind ATP. T82 serves as a coordination point for Mg(2+). The tract at residues T198–D268 is small ATPAse domain (RuvB-S). The head domain (RuvB-H) stretch occupies residues P271–E356. Residues R326 and R331 each contribute to the DNA site.

Belongs to the RuvB family. In terms of assembly, homohexamer. Forms an RuvA(8)-RuvB(12)-Holliday junction (HJ) complex. HJ DNA is sandwiched between 2 RuvA tetramers; dsDNA enters through RuvA and exits via RuvB. An RuvB hexamer assembles on each DNA strand where it exits the tetramer. Each RuvB hexamer is contacted by two RuvA subunits (via domain III) on 2 adjacent RuvB subunits; this complex drives branch migration. In the full resolvosome a probable DNA-RuvA(4)-RuvB(12)-RuvC(2) complex forms which resolves the HJ.

The protein localises to the cytoplasm. It catalyses the reaction ATP + H2O = ADP + phosphate + H(+). Its function is as follows. The RuvA-RuvB-RuvC complex processes Holliday junction (HJ) DNA during genetic recombination and DNA repair, while the RuvA-RuvB complex plays an important role in the rescue of blocked DNA replication forks via replication fork reversal (RFR). RuvA specifically binds to HJ cruciform DNA, conferring on it an open structure. The RuvB hexamer acts as an ATP-dependent pump, pulling dsDNA into and through the RuvAB complex. RuvB forms 2 homohexamers on either side of HJ DNA bound by 1 or 2 RuvA tetramers; 4 subunits per hexamer contact DNA at a time. Coordinated motions by a converter formed by DNA-disengaged RuvB subunits stimulates ATP hydrolysis and nucleotide exchange. Immobilization of the converter enables RuvB to convert the ATP-contained energy into a lever motion, pulling 2 nucleotides of DNA out of the RuvA tetramer per ATP hydrolyzed, thus driving DNA branch migration. The RuvB motors rotate together with the DNA substrate, which together with the progressing nucleotide cycle form the mechanistic basis for DNA recombination by continuous HJ branch migration. Branch migration allows RuvC to scan DNA until it finds its consensus sequence, where it cleaves and resolves cruciform DNA. This Polaromonas naphthalenivorans (strain CJ2) protein is Holliday junction branch migration complex subunit RuvB.